The following is a 142-amino-acid chain: Small ribosomal subunit protein uS9 (142 aa).

This sequence belongs to the universal ribosomal protein uS9 family. As to quaternary structure, component of the small ribosomal subunit (SSU). Mature N.crassa ribosomes consist of a small (40S) and a large (60S) subunit. The 40S small subunit contains 1 molecule of ribosomal RNA (18S rRNA) and at least 32 different proteins. The large 60S subunit contains 3 rRNA molecules (26S, 5.8S and 5S rRNA) and at least 42 different proteins.

The protein resides in the cytoplasm. Functionally, component of the ribosome, a large ribonucleoprotein complex responsible for the synthesis of proteins in the cell. The small ribosomal subunit (SSU) binds messenger RNAs (mRNAs) and translates the encoded message by selecting cognate aminoacyl-transfer RNA (tRNA) molecules. The large subunit (LSU) contains the ribosomal catalytic site termed the peptidyl transferase center (PTC), which catalyzes the formation of peptide bonds, thereby polymerizing the amino acids delivered by tRNAs into a polypeptide chain. The nascent polypeptides leave the ribosome through a tunnel in the LSU and interact with protein factors that function in enzymatic processing, targeting, and the membrane insertion of nascent chains at the exit of the ribosomal tunnel. The sequence is that of Small ribosomal subunit protein uS9 (rps-16) from Neurospora crassa (strain ATCC 24698 / 74-OR23-1A / CBS 708.71 / DSM 1257 / FGSC 987).